A 134-amino-acid polypeptide reads, in one-letter code: Terepressin/terephysin (134 aa).

The first 33 residues, 1–33 (MKCSVLPRSRLSWTMCVLLLPLLMLMLEGGVQG), serve as a signal peptide directing secretion. Cysteines 34 and 39 form a disulfide. Positions 44–50 (KRAVDSV) are excised as a propeptide. 7 disulfide bridges follow: cysteine 56–cysteine 100, cysteine 59–cysteine 73, cysteine 67–cysteine 90, cysteine 74–cysteine 80, cysteine 107–cysteine 121, cysteine 115–cysteine 133, and cysteine 122–cysteine 127.

It belongs to the vasopressin/oxytocin family. Post-translationally, contains 7 disulfide bonds. As to expression, expressed by the venom duct.

The protein localises to the secreted. In Terebra subulata (Chocolate spotted auger), this protein is Terepressin/terephysin.